A 623-amino-acid polypeptide reads, in one-letter code: Membrane protein insertase YidC (623 aa).

Transmembrane regions (helical) follow at residues 8-28 (LILA…LFPP), 379-399 (MGLA…PLAY), 449-469 (LPIL…FVTI), 507-527 (TTMA…SMWL), and 543-563 (IFAW…SGLV). Residues 601-617 (KPAAQPAGKAANDGAAP) are compositionally biased toward low complexity. Residues 601 to 623 (KPAAQPAGKAANDGAAPAKKRKP) are disordered.

This sequence belongs to the OXA1/ALB3/YidC family. Type 1 subfamily. Interacts with the Sec translocase complex via SecD. Specifically interacts with transmembrane segments of nascent integral membrane proteins during membrane integration.

The protein localises to the cell inner membrane. In terms of biological role, required for the insertion and/or proper folding and/or complex formation of integral membrane proteins into the membrane. Involved in integration of membrane proteins that insert both dependently and independently of the Sec translocase complex, as well as at least some lipoproteins. Aids folding of multispanning membrane proteins. This Cereibacter sphaeroides (strain ATCC 17023 / DSM 158 / JCM 6121 / CCUG 31486 / LMG 2827 / NBRC 12203 / NCIMB 8253 / ATH 2.4.1.) (Rhodobacter sphaeroides) protein is Membrane protein insertase YidC.